We begin with the raw amino-acid sequence, 190 residues long: Potassium-transporting ATPase KdpC subunit (190 aa).

The helical transmembrane segment at 13–33 (VGFLLLTLMCGVVYPGIVTIF) threads the bilayer.

The protein belongs to the KdpC family. As to quaternary structure, the system is composed of three essential subunits: KdpA, KdpB and KdpC.

It localises to the cell membrane. In terms of biological role, part of the high-affinity ATP-driven potassium transport (or Kdp) system, which catalyzes the hydrolysis of ATP coupled with the electrogenic transport of potassium into the cytoplasm. This subunit acts as a catalytic chaperone that increases the ATP-binding affinity of the ATP-hydrolyzing subunit KdpB by the formation of a transient KdpB/KdpC/ATP ternary complex. The polypeptide is Potassium-transporting ATPase KdpC subunit (Listeria monocytogenes serotype 4b (strain CLIP80459)).